A 1024-amino-acid chain; its full sequence is Multidrug resistance protein MdtC (1024 aa).

Helical transmembrane passes span 12–32, 333–353, 360–380, 387–407, 435–455, 469–489, 528–548, 853–873, 875–895, 897–917, 953–973, and 984–1004; these read VATT…FSLL, EVER…FIFL, LIPA…MYLC, LSLM…IVVL, VLSM…MAGL, VAIG…CAWL, WVMV…ISIP, LWLI…LYES, VHPL…LLAL, LFDA…IGIV, PIIM…LSSG, and ITIV…TPVI.

This sequence belongs to the resistance-nodulation-cell division (RND) (TC 2.A.6) family. MdtC subfamily. As to quaternary structure, part of a tripartite efflux system composed of MdtA, MdtB and MdtC. MdtC forms a heteromultimer with MdtB.

It localises to the cell inner membrane. In Yersinia pseudotuberculosis serotype IB (strain PB1/+), this protein is Multidrug resistance protein MdtC.